We begin with the raw amino-acid sequence, 341 residues long: NADH-ubiquinone oxidoreductase chain 2 (341 aa).

9 consecutive transmembrane segments (helical) span residues 8 to 28 (IFLIMLIFGTLVTISSNSWLG), 61 to 81 (FLTQAFASSILLFAIIMLMFL), 95 to 115 (ILILSTLLLKSGAAPFHFWFP), 145 to 165 (FIYNFFMISIILSMLIGSLGG), 174 to 191 (LMAFSSINHLGWMLLAMM), 195 to 215 (MLWMTYFLMYSLLSFSIVLMF), 238 to 258 (LLIFLNLLSLGGLPPFLGFLP), 272 to 292 (LFILTISVCLTLITLYFYLRL), and 321 to 341 (LIFNFISIGGLVMISMIYIIM).

The protein belongs to the complex I subunit 2 family.

Its subcellular location is the mitochondrion inner membrane. The enzyme catalyses a ubiquinone + NADH + 5 H(+)(in) = a ubiquinol + NAD(+) + 4 H(+)(out). Core subunit of the mitochondrial membrane respiratory chain NADH dehydrogenase (Complex I) that is believed to belong to the minimal assembly required for catalysis. Complex I functions in the transfer of electrons from NADH to the respiratory chain. The immediate electron acceptor for the enzyme is believed to be ubiquinone. The sequence is that of NADH-ubiquinone oxidoreductase chain 2 (mt:ND2) from Anopheles gambiae (African malaria mosquito).